A 478-amino-acid polypeptide reads, in one-letter code: Ribosomal RNA small subunit methyltransferase F (478 aa).

Residues 126 to 132 (AAAPGSK), glutamate 150, aspartate 177, and aspartate 195 each bind S-adenosyl-L-methionine. The active-site Nucleophile is cysteine 248.

It belongs to the class I-like SAM-binding methyltransferase superfamily. RsmB/NOP family.

Its subcellular location is the cytoplasm. It catalyses the reaction cytidine(1407) in 16S rRNA + S-adenosyl-L-methionine = 5-methylcytidine(1407) in 16S rRNA + S-adenosyl-L-homocysteine + H(+). In terms of biological role, specifically methylates the cytosine at position 1407 (m5C1407) of 16S rRNA. The protein is Ribosomal RNA small subunit methyltransferase F of Erwinia tasmaniensis (strain DSM 17950 / CFBP 7177 / CIP 109463 / NCPPB 4357 / Et1/99).